We begin with the raw amino-acid sequence, 247 residues long: Carboxy-S-adenosyl-L-methionine synthase (247 aa).

Residues Tyr40, 65–67, 90–91, 122–123, Asn137, and Arg204 contribute to the S-adenosyl-L-methionine site; these read GSS, DN, and DI.

This sequence belongs to the class I-like SAM-binding methyltransferase superfamily. Cx-SAM synthase family. As to quaternary structure, homodimer.

The catalysed reaction is prephenate + S-adenosyl-L-methionine = carboxy-S-adenosyl-L-methionine + 3-phenylpyruvate + H2O. Catalyzes the conversion of S-adenosyl-L-methionine (SAM) to carboxy-S-adenosyl-L-methionine (Cx-SAM). In Pseudomonas fluorescens (strain SBW25), this protein is Carboxy-S-adenosyl-L-methionine synthase.